We begin with the raw amino-acid sequence, 166 residues long: 16S rRNA aminocarboxypropyltransferase (166 aa).

S-adenosyl-L-methionine-binding residues include T17, I62, L84, Y99, and S103.

It belongs to the TDD superfamily. TSR3 family.

It is found in the cytoplasm. The catalysed reaction is an N(1)-methylpseudouridine in rRNA + S-adenosyl-L-methionine = N(1)-methyl-N(3)-[(3S)-3-amino-3-carboxypropyl]pseudouridine in rRNA + S-methyl-5'-thioadenosine + H(+). Its function is as follows. Aminocarboxypropyltransferase that catalyzes the aminocarboxypropyl transfer on pseudouridine corresponding to position 914 in M.jannaschii 16S rRNA. It constitutes the last step in biosynthesis of the hypermodified N1-methyl-N3-(3-amino-3-carboxypropyl) pseudouridine (m1acp3-Psi). The polypeptide is 16S rRNA aminocarboxypropyltransferase (Saccharolobus islandicus (strain M.16.27) (Sulfolobus islandicus)).